A 20-amino-acid chain; its full sequence is Non-specific lipid-transfer protein-like protein (20 aa).

It belongs to the plant LTP family.

In Jatropha curcas (Barbados nut), this protein is Non-specific lipid-transfer protein-like protein.